The following is a 295-amino-acid chain: Ribosomal protein L11 methyltransferase (295 aa).

S-adenosyl-L-methionine-binding residues include T138, G161, D183, and N230.

The protein belongs to the methyltransferase superfamily. PrmA family.

The protein resides in the cytoplasm. The catalysed reaction is L-lysyl-[protein] + 3 S-adenosyl-L-methionine = N(6),N(6),N(6)-trimethyl-L-lysyl-[protein] + 3 S-adenosyl-L-homocysteine + 3 H(+). In terms of biological role, methylates ribosomal protein L11. This chain is Ribosomal protein L11 methyltransferase, found in Rhodopseudomonas palustris (strain BisB5).